Consider the following 1032-residue polypeptide: Error-prone DNA polymerase (1032 aa).

Belongs to the DNA polymerase type-C family. DnaE2 subfamily.

It is found in the cytoplasm. The enzyme catalyses DNA(n) + a 2'-deoxyribonucleoside 5'-triphosphate = DNA(n+1) + diphosphate. DNA polymerase involved in damage-induced mutagenesis and translesion synthesis (TLS). It is not the major replicative DNA polymerase. The sequence is that of Error-prone DNA polymerase from Hahella chejuensis (strain KCTC 2396).